The chain runs to 83 residues: MARQMMTVGCLILIVVLLDMMVPVFNTCPGQYDECGNGPEEGECCGTHNYCCKNACTTYHHCHGGRDAGKLLRSLKKLKLTTH.

An N-terminal signal peptide occupies residues 1–27; it reads MARQMMTVGCLILIVVLLDMMVPVFNT.

It belongs to the conopeptide I2-like superfamily. In terms of processing, contains 4 disulfide bonds. As to expression, expressed by the venom duct.

Its subcellular location is the secreted. Functionally, acts as a neurotoxin by inhibiting voltage-gated potassium channels (Kv). The protein is Turripeptide Lol11.1 of Iotyrris olangoensis (Sea snail).